Reading from the N-terminus, the 294-residue chain is ATP synthase gamma chain (294 aa).

It belongs to the ATPase gamma chain family. F-type ATPases have 2 components, CF(1) - the catalytic core - and CF(0) - the membrane proton channel. CF(1) has five subunits: alpha(3), beta(3), gamma(1), delta(1), epsilon(1). CF(0) has three main subunits: a, b and c.

It is found in the cell inner membrane. Its function is as follows. Produces ATP from ADP in the presence of a proton gradient across the membrane. The gamma chain is believed to be important in regulating ATPase activity and the flow of protons through the CF(0) complex. The protein is ATP synthase gamma chain of Mesorhizobium japonicum (strain LMG 29417 / CECT 9101 / MAFF 303099) (Mesorhizobium loti (strain MAFF 303099)).